The following is a 245-amino-acid chain: 1-(5-phosphoribosyl)-5-[(5-phosphoribosylamino)methylideneamino] imidazole-4-carboxamide isomerase (245 aa).

The active-site Proton acceptor is the aspartate 7. Catalysis depends on aspartate 129, which acts as the Proton donor.

Belongs to the HisA/HisF family.

The protein localises to the cytoplasm. It catalyses the reaction 1-(5-phospho-beta-D-ribosyl)-5-[(5-phospho-beta-D-ribosylamino)methylideneamino]imidazole-4-carboxamide = 5-[(5-phospho-1-deoxy-D-ribulos-1-ylimino)methylamino]-1-(5-phospho-beta-D-ribosyl)imidazole-4-carboxamide. The protein operates within amino-acid biosynthesis; L-histidine biosynthesis; L-histidine from 5-phospho-alpha-D-ribose 1-diphosphate: step 4/9. The polypeptide is 1-(5-phosphoribosyl)-5-[(5-phosphoribosylamino)methylideneamino] imidazole-4-carboxamide isomerase (Erwinia tasmaniensis (strain DSM 17950 / CFBP 7177 / CIP 109463 / NCPPB 4357 / Et1/99)).